We begin with the raw amino-acid sequence, 468 residues long: uncharacterized protein (468 aa).

Residues 1-27 (MRKWYFILLAGVLTSVILAFVYDKTKA) form the signal peptide. 8 PbH1 repeats span residues 125–154 (KHDI…YVSG), 156–185 (SSHI…AVYG), 189–214 (MKDI…VLNG), 216–238 (IDGF…DLIG), 249–283 (VRNG…YVDG), 284–305 (GHDI…EATS), 312–334 (ANAI…SIGG), and 397–420 (NEGN…WMWK).

Its subcellular location is the secreted. This is an uncharacterized protein from Bacillus subtilis (strain 168).